We begin with the raw amino-acid sequence, 92 residues long: Small ribosomal subunit protein uS19 (92 aa).

The disordered stretch occupies residues 73-92; that stretch reads EFSPTRSFRGHAGAKNKGRK. Basic residues predominate over residues 80-92; the sequence is FRGHAGAKNKGRK.

This sequence belongs to the universal ribosomal protein uS19 family.

Its function is as follows. Protein S19 forms a complex with S13 that binds strongly to the 16S ribosomal RNA. The sequence is that of Small ribosomal subunit protein uS19 from Christiangramia forsetii (strain DSM 17595 / CGMCC 1.15422 / KT0803) (Gramella forsetii).